The primary structure comprises 38 residues: Photosystem II reaction center protein L (38 aa).

The chain crosses the membrane as a helical span at residues 17-37; it reads SLYWGLLLIFVLAVLFSSYIF.

It belongs to the PsbL family. As to quaternary structure, PSII is composed of 1 copy each of membrane proteins PsbA, PsbB, PsbC, PsbD, PsbE, PsbF, PsbH, PsbI, PsbJ, PsbK, PsbL, PsbM, PsbT, PsbX, PsbY, PsbZ, Psb30/Ycf12, at least 3 peripheral proteins of the oxygen-evolving complex and a large number of cofactors. It forms dimeric complexes.

The protein resides in the plastid. It is found in the chloroplast thylakoid membrane. Its function is as follows. One of the components of the core complex of photosystem II (PSII). PSII is a light-driven water:plastoquinone oxidoreductase that uses light energy to abstract electrons from H(2)O, generating O(2) and a proton gradient subsequently used for ATP formation. It consists of a core antenna complex that captures photons, and an electron transfer chain that converts photonic excitation into a charge separation. This subunit is found at the monomer-monomer interface and is required for correct PSII assembly and/or dimerization. The polypeptide is Photosystem II reaction center protein L (Oltmannsiellopsis viridis (Marine flagellate)).